The chain runs to 177 residues: Large ribosomal subunit protein uL6 (177 aa).

It belongs to the universal ribosomal protein uL6 family. In terms of assembly, part of the 50S ribosomal subunit.

This protein binds to the 23S rRNA, and is important in its secondary structure. It is located near the subunit interface in the base of the L7/L12 stalk, and near the tRNA binding site of the peptidyltransferase center. The polypeptide is Large ribosomal subunit protein uL6 (Glaesserella parasuis serovar 5 (strain SH0165) (Haemophilus parasuis)).